Reading from the N-terminus, the 738-residue chain is Platelet endothelial cell adhesion molecule (738 aa).

An N-terminal signal peptide occupies residues 1–27; that stretch reads MQPRWAQGATMWLGVLLTLLLCSSLEG. Residues 28–601 lie on the Extracellular side of the membrane; sequence QENSFTINSV…VRVILAPWKK (574 aa). Ig-like C2-type domains are found at residues 35–121, 145–233, and 236–315; these read NSVD…KTTA, GGIV…TESF, and PKFH…SKVS. Asn52, Asn84, and Asn151 each carry an N-linked (GlcNAc...) asparagine glycan. A disulfide bridge links Cys57 with Cys109. Intrachain disulfides connect Cys152–Cys206 and Cys256–Cys304. Residues Asn301, Asn320, Asn344, Asn356, Asn453, and Asn551 are each glycosylated (N-linked (GlcNAc...) asparagine). 3 consecutive Ig-like C2-type domains span residues 328 to 401, 424 to 493, and 499 to 591; these read PELE…NTVQ, GQTI…EVLR, and PVDE…KILT. Cystine bridges form between Cys347–Cys386, Cys431–Cys476, and Cys523–Cys572. A helical membrane pass occupies residues 602-620; it reads GLIAVVIIGVIIALLIIAA. Residues 621 to 738 are Cytoplasmic-facing; the sequence is KCYFLRKAKA…SRTEGSLDGT (118 aa). Cys622 is lipidated: S-palmitoyl cysteine. Positions 658-715 are disordered; it reads EANSHYGHNDDVRNHAMKPINDNKEPLNSDVQYTEVQVSSAESHKDLGKKDTETVYSE. Positions 686-698 are enriched in polar residues; it reads SDVQYTEVQVSSA. 2 short sequence motifs (ITIM motif) span residues 688 to 693 and 711 to 716; these read VQYTEV and TVYSEV. 2 positions are modified to phosphotyrosine; by FER: Tyr690 and Tyr713. The segment covering 699–715 has biased composition (basic and acidic residues); sequence ESHKDLGKKDTETVYSE. The interval 709 to 729 is membrane-bound segment which detaches upon phosphorylation; the sequence is TETVYSEVRKAVPDAVESRYS. Residues 721 to 738 are may play a role in cytoprotective signaling; that stretch reads PDAVESRYSRTEGSLDGT. Phosphoserine is present on residues Ser729 and Ser734.

Trans-homodimer (via Ig-like C2-type 1 and Ig-like C2-type 2 domains); trans-homodimerization is required for cell-cell interaction. Forms a complex with BDKRB2 and GNAQ. Interacts with BDKRB2 and GNAQ. Interacts with PTPN11; Tyr-713 is critical for PTPN11 recruitment. Interacts with FER. Interacts (via Ig-like C2-type domain 6) with CD177; the interaction is Ca(2+)-dependent; the interaction is direct. Phosphorylated on Ser and Tyr residues after cellular activation by src kinases. Upon activation, phosphorylated on Ser-729 which probably initiates the dissociation of the membrane-interaction segment (residues 709-729) from the cell membrane allowing the sequential phosphorylation of Tyr-713 and Tyr-690. Constitutively phosphorylated on Ser-734 in resting platelets. Phosphorylated on tyrosine residues by FER and FES in response to FCER1 activation. In endothelial cells Fyn mediates mechanical-force (stretch or pull) induced tyrosine phosphorylation. Post-translationally, palmitoylation by ZDHHC21 is necessary for cell surface expression in endothelial cells and enrichment in membrane rafts. As to expression, expressed on platelets and leukocytes and is primarily concentrated at the borders between endothelial cells. Expressed in human umbilical vein endothelial cells (HUVECs) (at protein level). Expressed on neutrophils (at protein level). Isoform Long predominates in all tissues examined. Isoform Delta12 is detected only in trachea. Isoform Delta14-15 is only detected in lung. Isoform Delta14 is detected in all tissues examined with the strongest expression in heart. Isoform Delta15 is expressed in brain, testis, ovary, cell surface of platelets, human umbilical vein endothelial cells (HUVECs), Jurkat T-cell leukemia, human erythroleukemia (HEL) and U-937 histiocytic lymphoma cell lines (at protein level).

It is found in the cell membrane. The protein localises to the membrane raft. The protein resides in the cell junction. Its function is as follows. Cell adhesion molecule which is required for leukocyte transendothelial migration (TEM) under most inflammatory conditions. Tyr-690 plays a critical role in TEM and is required for efficient trafficking of PECAM1 to and from the lateral border recycling compartment (LBRC) and is also essential for the LBRC membrane to be targeted around migrating leukocytes. Trans-homophilic interaction may play a role in endothelial cell-cell adhesion via cell junctions. Heterophilic interaction with CD177 plays a role in transendothelial migration of neutrophils. Homophilic ligation of PECAM1 prevents macrophage-mediated phagocytosis of neighboring viable leukocytes by transmitting a detachment signal. Promotes macrophage-mediated phagocytosis of apoptotic leukocytes by tethering them to the phagocytic cells; PECAM1-mediated detachment signal appears to be disabled in apoptotic leukocytes. Modulates bradykinin receptor BDKRB2 activation. Regulates bradykinin- and hyperosmotic shock-induced ERK1/2 activation in endothelial cells. Induces susceptibility to atherosclerosis. In terms of biological role, does not protect against apoptosis. The polypeptide is Platelet endothelial cell adhesion molecule (PECAM1) (Homo sapiens (Human)).